A 111-amino-acid polypeptide reads, in one-letter code: ATP synthase subunit c (111 aa).

The next 2 membrane-spanning stretches (helical) occupy residues 38 to 58 (GLGV…GSGL) and 89 to 109 (AGIA…LIFV).

This sequence belongs to the ATPase C chain family. F-type ATPases have 2 components, F(1) - the catalytic core - and F(0) - the membrane proton channel. F(1) has five subunits: alpha(3), beta(3), gamma(1), delta(1), epsilon(1). F(0) has three main subunits: a(1), b(2) and c(10-14). The alpha and beta chains form an alternating ring which encloses part of the gamma chain. F(1) is attached to F(0) by a central stalk formed by the gamma and epsilon chains, while a peripheral stalk is formed by the delta and b chains.

The protein resides in the cell membrane. Functionally, f(1)F(0) ATP synthase produces ATP from ADP in the presence of a proton or sodium gradient. F-type ATPases consist of two structural domains, F(1) containing the extramembraneous catalytic core and F(0) containing the membrane proton channel, linked together by a central stalk and a peripheral stalk. During catalysis, ATP synthesis in the catalytic domain of F(1) is coupled via a rotary mechanism of the central stalk subunits to proton translocation. In terms of biological role, key component of the F(0) channel; it plays a direct role in translocation across the membrane. A homomeric c-ring of between 10-14 subunits forms the central stalk rotor element with the F(1) delta and epsilon subunits. The polypeptide is ATP synthase subunit c (Mycoplasmopsis synoviae (strain 53) (Mycoplasma synoviae)).